The sequence spans 337 residues: Glyceraldehyde-3-phosphate dehydrogenase 1, cytosolic (337 aa).

NAD(+) is bound by residues 13-14 (RI), aspartate 35, and arginine 82. D-glyceraldehyde 3-phosphate is bound by residues 153–155 (SCT), threonine 184, 213–214 (TG), and arginine 236. Cysteine 154 acts as the Nucleophile in catalysis. Asparagine 318 is an NAD(+) binding site.

This sequence belongs to the glyceraldehyde-3-phosphate dehydrogenase family. Homotetramer.

Its subcellular location is the cytoplasm. The enzyme catalyses D-glyceraldehyde 3-phosphate + phosphate + NAD(+) = (2R)-3-phospho-glyceroyl phosphate + NADH + H(+). Its pathway is carbohydrate degradation; glycolysis; pyruvate from D-glyceraldehyde 3-phosphate: step 1/5. Its function is as follows. Key enzyme in glycolysis that catalyzes the first step of the pathway by converting D-glyceraldehyde 3-phosphate (G3P) into 3-phospho-D-glyceroyl phosphate. Essential for the maintenance of cellular ATP levels and carbohydrate metabolism. This Hordeum vulgare (Barley) protein is Glyceraldehyde-3-phosphate dehydrogenase 1, cytosolic (GAPC).